The primary structure comprises 178 residues: Large ribosomal subunit protein uL5 (178 aa).

The protein belongs to the universal ribosomal protein uL5 family. As to quaternary structure, part of the 50S ribosomal subunit; part of the 5S rRNA/L5/L18/L25 subcomplex. Contacts the 5S rRNA and the P site tRNA. Forms a bridge to the 30S subunit in the 70S ribosome.

Functionally, this is one of the proteins that bind and probably mediate the attachment of the 5S RNA into the large ribosomal subunit, where it forms part of the central protuberance. In the 70S ribosome it contacts protein S13 of the 30S subunit (bridge B1b), connecting the 2 subunits; this bridge is implicated in subunit movement. Contacts the P site tRNA; the 5S rRNA and some of its associated proteins might help stabilize positioning of ribosome-bound tRNAs. This Wigglesworthia glossinidia brevipalpis protein is Large ribosomal subunit protein uL5.